The following is a 236-amino-acid chain: Urease accessory protein UreG (236 aa).

The tract at residues 1-26 (MHDHSLHSGHDHGLGPGSFHDRGAPH) is disordered. 42-49 (GPVGSGKT) is a binding site for GTP.

This sequence belongs to the SIMIBI class G3E GTPase family. UreG subfamily. As to quaternary structure, homodimer. UreD, UreF and UreG form a complex that acts as a GTP-hydrolysis-dependent molecular chaperone, activating the urease apoprotein by helping to assemble the nickel containing metallocenter of UreC. The UreE protein probably delivers the nickel.

The protein localises to the cytoplasm. In terms of biological role, facilitates the functional incorporation of the urease nickel metallocenter. This process requires GTP hydrolysis, probably effectuated by UreG. This chain is Urease accessory protein UreG, found in Anaeromyxobacter sp. (strain Fw109-5).